Reading from the N-terminus, the 186-residue chain is dCTP deaminase (186 aa).

A dCTP-binding site is contributed by lysine 107 to arginine 112. Glutamate 133 functions as the Proton donor/acceptor in the catalytic mechanism. DCTP contacts are provided by glutamine 152, tyrosine 166, and glutamine 176.

The protein belongs to the dCTP deaminase family. As to quaternary structure, homotrimer.

The catalysed reaction is dCTP + H2O + H(+) = dUTP + NH4(+). Its pathway is pyrimidine metabolism; dUMP biosynthesis; dUMP from dCTP (dUTP route): step 1/2. In terms of biological role, catalyzes the deamination of dCTP to dUTP. The polypeptide is dCTP deaminase (Chloroflexus aggregans (strain MD-66 / DSM 9485)).